Here is a 258-residue protein sequence, read N- to C-terminus: Indole-3-glycerol phosphate synthase (258 aa).

Belongs to the TrpC family.

The enzyme catalyses 1-(2-carboxyphenylamino)-1-deoxy-D-ribulose 5-phosphate + H(+) = (1S,2R)-1-C-(indol-3-yl)glycerol 3-phosphate + CO2 + H2O. The protein operates within amino-acid biosynthesis; L-tryptophan biosynthesis; L-tryptophan from chorismate: step 4/5. The sequence is that of Indole-3-glycerol phosphate synthase from Endomicrobium trichonymphae.